The following is a 349-amino-acid chain: Ion-translocating oxidoreductase complex subunit D (349 aa).

3 consecutive transmembrane segments (helical) span residues 20–42 (VMQR…FGWG), 77–99 (SAML…WMIV), and 124–144 (AMAA…TWIA). Threonine 185 carries the FMN phosphoryl threonine modification. 5 helical membrane-spanning segments follow: residues 212–232 (STGV…LVLL), 239–259 (WHIS…GFLL), 265–285 (ASPL…FIAT), 291–311 (ATSP…VYII), and 315–335 (GGYP…APFI).

This sequence belongs to the NqrB/RnfD family. As to quaternary structure, the complex is composed of six subunits: RnfA, RnfB, RnfC, RnfD, RnfE and RnfG. FMN is required as a cofactor.

It is found in the cell inner membrane. In terms of biological role, part of a membrane-bound complex that couples electron transfer with translocation of ions across the membrane. The protein is Ion-translocating oxidoreductase complex subunit D of Shewanella baltica (strain OS185).